The following is a 156-amino-acid chain: ATP synthase subunit b (156 aa).

The helical transmembrane segment at 11–31 (LIAFALFVWFCMKFVWPPIIN) threads the bilayer.

This sequence belongs to the ATPase B chain family. F-type ATPases have 2 components, F(1) - the catalytic core - and F(0) - the membrane proton channel. F(1) has five subunits: alpha(3), beta(3), gamma(1), delta(1), epsilon(1). F(0) has three main subunits: a(1), b(2) and c(10-14). The alpha and beta chains form an alternating ring which encloses part of the gamma chain. F(1) is attached to F(0) by a central stalk formed by the gamma and epsilon chains, while a peripheral stalk is formed by the delta and b chains.

It is found in the cell inner membrane. F(1)F(0) ATP synthase produces ATP from ADP in the presence of a proton or sodium gradient. F-type ATPases consist of two structural domains, F(1) containing the extramembraneous catalytic core and F(0) containing the membrane proton channel, linked together by a central stalk and a peripheral stalk. During catalysis, ATP synthesis in the catalytic domain of F(1) is coupled via a rotary mechanism of the central stalk subunits to proton translocation. Its function is as follows. Component of the F(0) channel, it forms part of the peripheral stalk, linking F(1) to F(0). The sequence is that of ATP synthase subunit b from Haemophilus influenzae (strain PittEE).